Consider the following 397-residue polypeptide: 3-ketoacyl-CoA thiolase, mitochondrial (397 aa).

The transit peptide at 1 to 16 directs the protein to the mitochondrion; not cleaved; that stretch reads MALLRGVFIVAAKRTP. Lys25 carries the N6-acetyllysine; alternate modification. Lys25 carries the post-translational modification N6-succinyllysine; alternate. Residue Cys92 is the Acyl-thioester intermediate of the active site. Residue Thr119 is modified to Phosphothreonine. At Ser121 the chain carries Phosphoserine. Residue Tyr127 is modified to Phosphotyrosine. Thr136 is modified (phosphothreonine). Lys137 is modified (N6-acetyllysine; alternate). Lys137 carries the N6-succinyllysine; alternate modification. A Phosphoserine modification is found at Ser140. Residues Lys143, Lys171, Lys191, and Lys209 each carry the N6-acetyllysine; alternate modification. Residues Lys143, Lys171, Lys191, and Lys209 each carry the N6-succinyllysine; alternate modification. An N6-succinyllysine mark is found at Lys212 and Lys214. The CoA site is built by Arg224 and Thr227. An N6-acetyllysine; alternate modification is found at Lys234. At Lys234 the chain carries N6-succinyllysine; alternate. An N6-succinyllysine modification is found at Lys240. Lys241 carries the post-translational modification N6-acetyllysine. Ser251 contacts CoA. N6-acetyllysine is present on residues Lys269 and Lys270. At Lys305 the chain carries N6-acetyllysine; alternate. N6-succinyllysine; alternate is present on Lys305. Ser310 is modified (phosphoserine). An N6-acetyllysine; alternate modification is found at Lys312. Residue Lys312 is modified to N6-succinyllysine; alternate. A Phosphoserine modification is found at Ser333. N6-acetyllysine occurs at positions 340 and 375. Residue Cys382 is the Proton donor/acceptor of the active site.

It belongs to the thiolase-like superfamily. Thiolase family. In terms of assembly, homotetramer. Interacts with BNIP3.

The protein localises to the mitochondrion. It catalyses the reaction an acyl-CoA + acetyl-CoA = a 3-oxoacyl-CoA + CoA. The enzyme catalyses 2 acetyl-CoA = acetoacetyl-CoA + CoA. It carries out the reaction acetyl-CoA + H2O = acetate + CoA + H(+). The catalysed reaction is propanoyl-CoA + H2O = propanoate + CoA + H(+). It catalyses the reaction butanoyl-CoA + H2O = butanoate + CoA + H(+). The enzyme catalyses hexanoyl-CoA + H2O = hexanoate + CoA + H(+). It carries out the reaction octanoyl-CoA + H2O = octanoate + CoA + H(+). The catalysed reaction is decanoyl-CoA + H2O = decanoate + CoA + H(+). It catalyses the reaction dodecanoyl-CoA + H2O = dodecanoate + CoA + H(+). The enzyme catalyses tetradecanoyl-CoA + H2O = tetradecanoate + CoA + H(+). It carries out the reaction hexadecanoyl-CoA + H2O = hexadecanoate + CoA + H(+). The protein operates within lipid metabolism; fatty acid beta-oxidation. Its function is as follows. In the production of energy from fats, this is one of the enzymes that catalyzes the last step of the mitochondrial beta-oxidation pathway, an aerobic process breaking down fatty acids into acetyl-CoA. Using free coenzyme A/CoA, catalyzes the thiolytic cleavage of medium- to long-chain unbranched 3-oxoacyl-CoAs into acetyl-CoA and a fatty acyl-CoA shortened by two carbon atoms. Also catalyzes the condensation of two acetyl-CoA molecules into acetoacetyl-CoA and could be involved in the production of ketone bodies. Also displays hydrolase activity on various fatty acyl-CoAs. Thereby, could be responsible for the production of acetate in a side reaction to beta-oxidation. Abolishes BNIP3-mediated apoptosis and mitochondrial damage. The polypeptide is 3-ketoacyl-CoA thiolase, mitochondrial (ACAA2) (Bos taurus (Bovine)).